The sequence spans 336 residues: SCP domain-containing protein 1 (336 aa).

Positions 1–18 (MEFKLLLVLCFNIGLICS) are cleaved as a signal peptide. N-linked (GlcNAc...) asparagine glycosylation is present at Asn47. Positions 73-85 (QGGNTAPSSSLPG) are enriched in polar residues. The segment at 73–94 (QGGNTAPSSSLPGVSSMPMPSA) is disordered. Positions 175-292 (LEEHNKFRSD…YCGDMSFIAC (118 aa)) constitute an SCP domain. N-linked (GlcNAc...) asparagine glycosylation is found at Asn213 and Asn257.

In terms of tissue distribution, component of the acid-insoluble and acid-soluble organic matrix of calcified layers of the shell (at protein level).

Its subcellular location is the secreted. In Lottia gigantea (Giant owl limpet), this protein is SCP domain-containing protein 1.